The sequence spans 197 residues: uncharacterized protein (197 aa).

The N-terminal stretch at 1–19 (MKLASLLVGSLMLAVPALA) is a signal peptide.

The protein localises to the secreted. This is an uncharacterized protein from Arthroderma benhamiae (strain ATCC MYA-4681 / CBS 112371) (Trichophyton mentagrophytes).